The sequence spans 134 residues: Putative protein KRIP1 (134 aa).

The interval 1 to 134 (MSPVHRSRTS…PDPALPLQML (134 aa)) is disordered. 3 stretches are compositionally biased toward polar residues: residues 9 to 24 (TSQTQEAHKPTSTLSF), 43 to 55 (SQPNACSRQSHVS), and 64 to 79 (CSQSKVSPPGTATNPN). Positions 119-128 (PAKPALPDPA) are enriched in pro residues.

Abundant expression is found in prostate, restricted to cells of epithelial origin in normal and diseased glands. Very low expression is detected in pancreas and ovary.

It localises to the cytoplasm. The protein localises to the nucleus. The chain is Putative protein KRIP1 (KLKP1) from Homo sapiens (Human).